The chain runs to 1017 residues: Disease resistance protein RML1B (1017 aa).

The region spanning 12-176 (YKFNVFASFH…KIARDVLDKL (165 aa)) is the TIR domain. The active site involves Glu-87. Residues 191–447 (EAHLREIKSL…HIAIFFNKED (257 aa)) form the NB-ARC domain. LRR repeat units follow at residues 539 to 562 (ISRISEVSIRKKAFKRMPNLQFLK), 583 to 605 (PCLLRLLDWKAYPSKSLPPTFNP), 606 to 628 (EHLVELNMHSSQLEYLWQGTQPL), 629 to 652 (KNLKKMDLSQSKNLKQLPDLSNAT), 654 to 675 (LEYLYLMGCESLIEIPSSISHL), 676 to 698 (HKLEMLATVGCINLEVIPAHMNL), 699 to 724 (ESLQTVYLGGCSRLRNIPVMSTNIRY), 738 to 760 (CPGLKTLDVSGSRNFKGLLTHLP), 761 to 782 (TSLTTLNLCYTDIERIPDCFKS), and 784 to 809 (HQLKGVNLRGCRRLASLPELPRSLLT).

The enzyme catalyses NAD(+) + H2O = ADP-D-ribose + nicotinamide + H(+). In terms of biological role, TIR-NB-LRR receptor-like protein that confers resistance to the pathogen Leptosphaeria maculans (blackleg disease). The protein is Disease resistance protein RML1B of Arabidopsis thaliana (Mouse-ear cress).